The sequence spans 427 residues: Endothelin-1 receptor (427 aa).

Residues 1 to 20 (METLCLRASFWLALVGCVIS) form the signal peptide. Residues 21-80 (DNPERYSTNLSNHVDDFTTFRGTELSFLVTTHQPTNLVLPSNGSMHNYCPQQTKITSAFK) lie on the Extracellular side of the membrane. N-linked (GlcNAc...) asparagine glycosylation is found at N29 and N62. Residues 81-102 (YINTVISCTIFIVGMVGNATLL) form a helical membrane-spanning segment. Over 103 to 112 (RIIYQNKCMR) the chain is Cytoplasmic. Residues 113-132 (NGPNALIASLALGDLIYVVI) traverse the membrane as a helical segment. At 133–159 (DLPINVFKLLAGRWPFDHNDFGVFLCK) the chain is on the extracellular side. A disulfide bridge links C158 with C239. Residues 160 to 181 (LFPFLQKSSVGITVLNLCALSV) traverse the membrane as a helical segment. Residues 182-205 (DRYRAVASWSRVQGIGIPLVTAIE) lie on the Cytoplasmic side of the membrane. The helical transmembrane segment at 206–229 (IVSIWILSFILAIPEAIGFVMVPF) threads the bilayer. Over 230 to 256 (EYRGEQHKTCMLNATSKFMEFYQDVKD) the chain is Extracellular. A helical transmembrane segment spans residues 257–278 (WWLFGFYFCMPLVCTAIFYTLM). Residues 279–306 (TCEMLNRRNGSLRIALSEHLKQRREVAK) are Cytoplasmic-facing. Residues 307–328 (TVFCLVVIFALCWFPLHLSRIL) traverse the membrane as a helical segment. The Extracellular segment spans residues 329–347 (KKTVYNEMDKNRCELLSFL). The chain crosses the membrane as a helical span at residues 348–372 (LLMDYIGINLATMNSCINPIALYFV). Topologically, residues 373–427 (SKKFKNCFQSCLCCCCYQSKSLMTSVPMNGTSIQWKNHDQNNHNTDRSSHKDSMN) are cytoplasmic. The segment at 406–427 (QWKNHDQNNHNTDRSSHKDSMN) is disordered. The segment covering 408 to 427 (KNHDQNNHNTDRSSHKDSMN) has biased composition (basic and acidic residues). At S425 the chain carries Phosphoserine.

Belongs to the G-protein coupled receptor 1 family. Endothelin receptor subfamily. EDNRA sub-subfamily. In terms of assembly, interacts with HDAC7 and KAT5. In terms of tissue distribution, isoform 1, isoform 3 and isoform 4 are expressed in a variety of tissues, with highest levels in the aorta and cerebellum, followed by lung, atrium and cerebral cortex, lower levels in the placenta, kidney, adrenal gland, duodenum, colon, ventricle and liver but no expression in umbilical vein endothelial cells. Within the placenta, isoform 1, isoform 2, isoform 3 and isoform 4 are expressed in the villi and stem villi vessels.

The protein localises to the cell membrane. In terms of biological role, receptor for endothelin-1. Mediates its action by association with G proteins that activate a phosphatidylinositol-calcium second messenger system. The rank order of binding affinities for ET-A is: ET1 &gt; ET2 &gt;&gt; ET3. The protein is Endothelin-1 receptor of Homo sapiens (Human).